The sequence spans 203 residues: Urease accessory protein UreG (203 aa).

Position 10–17 (10–17 (GPVGAGKT)) interacts with GTP.

Belongs to the SIMIBI class G3E GTPase family. UreG subfamily. As to quaternary structure, homodimer. UreD, UreF and UreG form a complex that acts as a GTP-hydrolysis-dependent molecular chaperone, activating the urease apoprotein by helping to assemble the nickel containing metallocenter of UreC. The UreE protein probably delivers the nickel.

The protein resides in the cytoplasm. Its function is as follows. Facilitates the functional incorporation of the urease nickel metallocenter. This process requires GTP hydrolysis, probably effectuated by UreG. This Micrococcus luteus (strain ATCC 4698 / DSM 20030 / JCM 1464 / CCM 169 / CCUG 5858 / IAM 1056 / NBRC 3333 / NCIMB 9278 / NCTC 2665 / VKM Ac-2230) (Micrococcus lysodeikticus) protein is Urease accessory protein UreG.